Consider the following 151-residue polypeptide: Transcriptional regulator MraZ (151 aa).

2 SpoVT-AbrB domains span residues 5-52 and 81-124; these read ANAI…PLSE and AVDL…DEDA.

Belongs to the MraZ family. In terms of assembly, forms oligomers.

Its subcellular location is the cytoplasm. The protein resides in the nucleoid. This is Transcriptional regulator MraZ from Pseudomonas syringae pv. tomato (strain ATCC BAA-871 / DC3000).